Reading from the N-terminus, the 355-residue chain is Putative inositol monophosphatase 3 (355 aa).

Residues 16 to 36 (VPATIFAILLTIVLVYFLNFH) form a helical membrane-spanning segment. Residues glutamate 127, aspartate 167, leucine 169, aspartate 170, and aspartate 292 each contribute to the Mg(2+) site. Residue glutamate 127 coordinates substrate. Substrate is bound by residues 169 to 172 (LDAT) and aspartate 292.

This sequence belongs to the inositol monophosphatase superfamily. The cofactor is Mg(2+).

It localises to the membrane. It carries out the reaction a myo-inositol phosphate + H2O = myo-inositol + phosphate. The protein operates within polyol metabolism; myo-inositol biosynthesis; myo-inositol from D-glucose 6-phosphate: step 2/2. The sequence is that of Putative inositol monophosphatase 3 from Drosophila pseudoobscura pseudoobscura (Fruit fly).